The chain runs to 235 residues: Nucleoside diphosphate kinase 4, chloroplastic (235 aa).

6 residues coordinate ATP: K93, F141, R169, T175, R186, and N196. The active-site Pros-phosphohistidine intermediate is H199.

Belongs to the NDK family. Homohexamer. It depends on Mg(2+) as a cofactor.

It is found in the plastid. The protein resides in the chloroplast thylakoid lumen. It catalyses the reaction a 2'-deoxyribonucleoside 5'-diphosphate + ATP = a 2'-deoxyribonucleoside 5'-triphosphate + ADP. It carries out the reaction a ribonucleoside 5'-diphosphate + ATP = a ribonucleoside 5'-triphosphate + ADP. Major role in the synthesis of nucleoside triphosphates other than ATP. The ATP gamma phosphate is transferred to the NDP beta phosphate via a ping-pong mechanism, using a phosphorylated active-site intermediate. Shows the highest specificity towards GDP. The sequence is that of Nucleoside diphosphate kinase 4, chloroplastic (NDK4) from Spinacia oleracea (Spinach).